Here is a 760-residue protein sequence, read N- to C-terminus: Catalase-peroxidase (760 aa).

Positions 1–45 are cleaved as a signal peptide; sequence MKGTPFRSPHLYQEGSSCMHRTIRSVAAVLTVVLSATIPMVPAWS. A cross-link (tryptophyl-tyrosyl-methioninium (Trp-Tyr) (with M-271)) is located at residues 124–245; the sequence is WHGAGTYRTY…LAATQMGLIY (122 aa). The Proton acceptor role is filled by His-125. A cross-link (tryptophyl-tyrosyl-methioninium (Tyr-Met) (with W-124)) is located at residues 245-271; that stretch reads YVNPEGPNGVPDPVAAARDIREAFGGM. His-286 contributes to the heme b binding site.

This sequence belongs to the peroxidase family. Peroxidase/catalase subfamily. In terms of assembly, homodimer or homotetramer. Heme b serves as cofactor. Post-translationally, formation of the three residue Trp-Tyr-Met cross-link is important for the catalase, but not the peroxidase activity of the enzyme.

It carries out the reaction H2O2 + AH2 = A + 2 H2O. The catalysed reaction is 2 H2O2 = O2 + 2 H2O. Its function is as follows. Bifunctional enzyme with both catalase and broad-spectrum peroxidase activity. This Granulibacter bethesdensis (strain ATCC BAA-1260 / CGDNIH1) protein is Catalase-peroxidase.